Reading from the N-terminus, the 37-residue chain is Large ribosomal subunit protein bL36 (37 aa).

It belongs to the bacterial ribosomal protein bL36 family.

The chain is Large ribosomal subunit protein bL36 from Thermomicrobium roseum (strain ATCC 27502 / DSM 5159 / P-2).